Here is a 149-residue protein sequence, read N- to C-terminus: Large ribosomal subunit protein bL9 (149 aa).

It belongs to the bacterial ribosomal protein bL9 family.

Functionally, binds to the 23S rRNA. In Syntrophus aciditrophicus (strain SB), this protein is Large ribosomal subunit protein bL9.